A 30-amino-acid polypeptide reads, in one-letter code: Cycloviolacin-H1 (30 aa).

Residues 1 to 30 (GIPCGESCVYIPCLTSAIGCSCKSKVCYRN) constitute a cross-link (cyclopeptide (Gly-Asn)). Disulfide bonds link C4-C20, C8-C22, and C13-C27.

Belongs to the cyclotide family. Bracelet subfamily. This is a cyclic peptide.

In terms of biological role, probably participates in a plant defense mechanism. The protein is Cycloviolacin-H1 of Viola hederacea (Australian violet).